A 469-amino-acid chain; its full sequence is Spliceosome-associated protein CWC27 homolog (469 aa).

Ser2 is modified (N-acetylserine). Residues 11–166 enclose the PPIase cyclophilin-type domain; sequence TNGKVLLKTT…NPHRIKSCEV (156 aa). A compositionally biased stretch (basic and acidic residues) spans 175 to 193; the sequence is TPREIKKPKNEKPEEEVKK. Disordered stretches follow at residues 175–415 and 428–469; these read TPRE…DDEG and RKVK…KERR. A coiled-coil region spans residues 206–229; sequence SFGEEAEEEEEEVNRVSQSMKGRS. The segment covering 231-241 has biased composition (basic and acidic residues); the sequence is SSHDLLKDDPH. A compositionally biased stretch (acidic residues) spans 256-278; sequence TGDLEDDGEDDSAERDEYMEDDE. Composition is skewed to basic and acidic residues over residues 302 to 341 and 356 to 368; these read GDGE…KVEE and EYRR…EALR. A coiled-coil region spans residues 309-371; sequence ASRSEELRKE…QKYEALRKQQ (63 aa). The span at 384–403 shows a compositional bias: polar residues; the sequence is ALLSQFKSKLTQAITETPEN. Residues 454-469 are compositionally biased toward basic and acidic residues; sequence RREESKKLLREKKERR.

Belongs to the cyclophilin-type PPIase family. In terms of assembly, part of the activated spliceosome B/catalytic step 1 spliceosome, one of the forms of the spliceosome which has a well-formed active site but still cannot catalyze the branching reaction and is composed at least of 52 proteins, the U2, U5 and U6 snRNAs and the pre-mRNA. Recruited during early steps of activated spliceosome B maturation, it is probably one of the first proteins released from this complex as he matures to the spliceosome C complex. Component of the minor spliceosome, which splices U12-type introns.

The protein resides in the nucleus. Functionally, as part of the spliceosome, plays a role in pre-mRNA splicing. Probable inactive PPIase with no peptidyl-prolyl cis-trans isomerase activity. As a component of the minor spliceosome, involved in the splicing of U12-type introns in pre-mRNAs. The polypeptide is Spliceosome-associated protein CWC27 homolog (Mus musculus (Mouse)).